Reading from the N-terminus, the 855-residue chain is Endochitinase 2 (855 aa).

Residues 1-22 (MGPTNILAAFIAVSSLFIQSLA) form the signal peptide. One can recognise a GH18 domain in the interval 29–340 (SNLAVYWGQG…DIMKEVLLRC (312 aa)). An N-linked (GlcNAc...) asparagine glycan is attached at asparagine 90. Glutamate 175 (proton donor) is an active-site residue. The disordered stretch occupies residues 341-672 (DPDPPTSTVT…APSSSTTEDR (332 aa)). Over residues 346–400 (TSTVTSTTSASTSTQTSSQSTTMETKTLSASTTPSSPSTVSPSSTMQTTSTGSTS) the composition is skewed to low complexity. Residues 401–456 (IETVTTRSQEPPSTTISTRSASTEPVTTRSQEPPSTTISTRSASTETVTTRSQEPP) show a composition bias toward polar residues. A compositionally biased stretch (low complexity) spans 457–483 (STTISTWSASTETSTSSQDSPSTTIST). Polar residues predominate over residues 484-521 (KSAPTGTVTTRSQDLPSTTISTRSPETETETATTKSQG). Over residues 522–533 (SPSITLSTRSSS) the composition is skewed to low complexity. A compositionally biased stretch (polar residues) spans 534–555 (AETVSTRSQHSSSTTISTKSAP). The span at 556–567 (TETGTTSEHSTS) shows a compositional bias: low complexity. The span at 568 to 641 (MPVSTRSAST…SQTPTTIITG (74 aa)) shows a compositional bias: polar residues. Low complexity-rich tracts occupy residues 642–652 (TPSDPVSAPTT) and 659–672 (TLTL…TEDR). Residue glycine 826 is the site of GPI-anchor amidated glycine attachment. The propeptide at 827–855 (SAMTVRSMDVVAKALITAGAAVLGLFLGL) is removed in mature form.

Belongs to the glycosyl hydrolase 18 family. Chitinase class III subfamily.

The protein resides in the cell membrane. The catalysed reaction is Random endo-hydrolysis of N-acetyl-beta-D-glucosaminide (1-&gt;4)-beta-linkages in chitin and chitodextrins.. May be associated with endosporulation. The protein is Endochitinase 2 (CTS2) of Coccidioides posadasii (strain C735) (Valley fever fungus).